The following is a 477-amino-acid chain: Argininosuccinate lyase (477 aa).

Belongs to the lyase 1 family. Argininosuccinate lyase subfamily.

The protein localises to the cytoplasm. The catalysed reaction is 2-(N(omega)-L-arginino)succinate = fumarate + L-arginine. It functions in the pathway amino-acid biosynthesis; L-arginine biosynthesis; L-arginine from L-ornithine and carbamoyl phosphate: step 3/3. The chain is Argininosuccinate lyase from Streptomyces avermitilis (strain ATCC 31267 / DSM 46492 / JCM 5070 / NBRC 14893 / NCIMB 12804 / NRRL 8165 / MA-4680).